A 225-amino-acid chain; its full sequence is Cyclin-dependent kinase inhibitor 3 (225 aa).

2 disordered regions span residues 47-94 and 130-169; these read AAAA…QRRR and ERKS…PLSP. Residues 55-67 are compositionally biased toward basic residues; it reads CRRRHRRGGRRGC. The span at 71 to 82 shows a compositional bias: low complexity; sequence GAGSARACGARS. Positions 143–153 are enriched in basic and acidic residues; that stretch reads VAAEHAGEHKH.

This sequence belongs to the CDI family. ICK/KRP subfamily.

This chain is Cyclin-dependent kinase inhibitor 3 (KRP3), found in Oryza sativa subsp. japonica (Rice).